The chain runs to 465 residues: Gamma-aminobutyric acid receptor subunit rho-2 (465 aa).

An N-terminal signal peptide occupies residues 1-20 (MPYFMRLALFLFCLMALVES). The Extracellular portion of the chain corresponds to 21–260 (RKPRRKRWTG…LYINFTLRRH (240 aa)). Residue arginine 105 coordinates 4-aminobutanoate. Asparagine 120 carries N-linked (GlcNAc...) asparagine glycosylation. A 4-aminobutanoate-binding site is contributed by serine 169. A disulfide bridge links cysteine 178 with cysteine 192. Glutamate 197 is a binding site for 4-aminobutanoate. The N-linked (GlcNAc...) asparagine glycan is linked to asparagine 254. A helical transmembrane segment spans residues 261 to 281 (IFFFLLQTYFPATLMVMLSWV). At 282 to 293 (SFWIDHRAVPAR) the chain is on the cytoplasmic side. The helical transmembrane segment at 294-314 (VSLGIMTVLTMSTIITGVNAS) threads the bilayer. Residues 315–325 (MPRVSYIRAVD) are Extracellular-facing. Residues 326 to 346 (IYLWVSFVFVFLSVLEYAAVN) traverse the membrane as a helical segment. Over 347-443 (YLTTVQEQKE…IFQNTHAIDK (97 aa)) the chain is Cytoplasmic. The chain crosses the membrane as a helical span at residues 444 to 464 (YSRLIFPAFYIVFNLIYWSVF). A topological domain (extracellular) is located at residue serine 465.

The protein belongs to the ligand-gated ion channel (TC 1.A.9) family. Gamma-aminobutyric acid receptor (TC 1.A.9.5) subfamily. GABRR2 sub-subfamily. Three rho subunits (rho-1/GBRR1, rho-2/GBRR2 and rho-3/GBRR3) coassemble either to form functional homopentamers or heteropentamers. Rho-2 is unable to form a functional homopentamer. Interacts with SQSTM1. As to expression, expressed in spinal cord and in cerebellum. Expressed in retina.

Its subcellular location is the postsynaptic cell membrane. It is found in the cell membrane. It carries out the reaction chloride(in) = chloride(out). With respect to regulation, in contrast with rho-1 and rho-3 homopentamers, rho-2 GABAARs are not inhibited by picrotoxin. In terms of biological role, rho subunit of the pentameric ligand-gated chloride channels responsible for mediating the effects of gamma-aminobutyric acid (GABA), the major inhibitory neurotransmitter in the brain. Rho-containing GABA-gated chloride channels are a subclass of GABA(A) receptors (GABAARs) entirely composed of rho subunits, where GABA molecules bind at the rho intersubunit interfaces. When activated by GABA, rho-GABAARs selectively allow the flow of chloride anions across the cell membrane down their electrochemical gradient. Rho-2 GABAARs may contribute to the regulation of glial development in the cerebellum by controlling extrasynaptic transmission. Rho-2 GABAARs are also involved in neuronal tonic (extrasynaptic) and phasic (synaptic) transmission in the Purkinje neurons of the cerebellum. Rho-2 GABAARs expressed in retina may play a role in retinal neurotransmission. This Rattus norvegicus (Rat) protein is Gamma-aminobutyric acid receptor subunit rho-2.